The primary structure comprises 330 residues: ADP-L-glycero-D-manno-heptose-6-epimerase (330 aa).

NADP(+)-binding positions include phenylalanine 11–isoleucine 12, aspartate 32–asparagine 33, lysine 39, lysine 54, glutamate 75–serine 79, and asparagine 92. Residue tyrosine 139 is the Proton acceptor of the active site. NADP(+) is bound at residue lysine 143. Asparagine 168 is a binding site for substrate. Positions 169 and 177 each coordinate NADP(+). The active-site Proton acceptor is the lysine 177. Residues arginine 179, histidine 186, phenylalanine 200–tyrosine 203, arginine 213, and tyrosine 292 contribute to the substrate site.

This sequence belongs to the NAD(P)-dependent epimerase/dehydratase family. HldD subfamily. In terms of assembly, homopentamer. Requires NADP(+) as cofactor.

The enzyme catalyses ADP-D-glycero-beta-D-manno-heptose = ADP-L-glycero-beta-D-manno-heptose. It participates in nucleotide-sugar biosynthesis; ADP-L-glycero-beta-D-manno-heptose biosynthesis; ADP-L-glycero-beta-D-manno-heptose from D-glycero-beta-D-manno-heptose 7-phosphate: step 4/4. In terms of biological role, catalyzes the interconversion between ADP-D-glycero-beta-D-manno-heptose and ADP-L-glycero-beta-D-manno-heptose via an epimerization at carbon 6 of the heptose. In Burkholderia pseudomallei (strain K96243), this protein is ADP-L-glycero-D-manno-heptose-6-epimerase.